The primary structure comprises 448 residues: Adenylosuccinate synthetase (448 aa).

Residues 22 to 28 (GDEGKGK) and 50 to 52 (GHT) contribute to the GTP site. The Proton acceptor role is filled by Asp23. The Mg(2+) site is built by Asp23 and Gly50. Residues 23-26 (DEGK), 48-51 (NAGH), Thr139, Arg153, Gln234, Thr249, and Arg321 contribute to the IMP site. The active-site Proton donor is His51. 317-323 (SVTGRPR) is a substrate binding site. GTP-binding positions include Arg323, 349-351 (KLD), and 431-433 (STG).

The protein belongs to the adenylosuccinate synthetase family. In terms of assembly, homodimer. The cofactor is Mg(2+).

Its subcellular location is the cytoplasm. The catalysed reaction is IMP + L-aspartate + GTP = N(6)-(1,2-dicarboxyethyl)-AMP + GDP + phosphate + 2 H(+). Its pathway is purine metabolism; AMP biosynthesis via de novo pathway; AMP from IMP: step 1/2. Plays an important role in the de novo pathway of purine nucleotide biosynthesis. Catalyzes the first committed step in the biosynthesis of AMP from IMP. This is Adenylosuccinate synthetase from Burkholderia mallei (strain NCTC 10247).